The sequence spans 2530 residues: Cullin-9 (2530 aa).

K87 is covalently cross-linked (Glycyl lysine isopeptide (Lys-Gly) (interchain with G-Cter in ubiquitin)). In terms of domain architecture, CPH spans 367-440; that stretch reads RSEFSSRSGY…HWHMLEILGP (74 aa). 2 disordered regions span residues 585–639 and 930–951; these read LPSS…KAQS and RGSPERAVLETPSTQGQDGSPE. Positions 940–949 are enriched in polar residues; the sequence is TPSTQGQDGS. A Phosphoserine modification is found at S978. The region spanning 1145-1324 is the DOC domain; it reads PITIPFFDVF…RTCLFYTIRA (180 aa). Position 1365-1372 (1365-1372) interacts with ATP; sequence AAQALGKT. 2 disordered regions span residues 1435–1468 and 1667–1690; these read EAPPGPSPEPSSQPLSKNSKGQDGSPTPAPTPVC and GDQEEWRPEKVEEDDEGQETGREL. S1459 carries the post-translational modification Phosphoserine. Residue K1884 forms a Glycyl lysine isopeptide (Lys-Gly) (interchain with G-Cter in NEDD8) linkage. The interval 2070–2287 is TRIAD supradomain; it reads RPDQCPVCVT…KDYYNCSAMV (218 aa). Positions 2074, 2077, 2092, 2094, 2097, 2100, 2119, 2124, 2164, 2170, 2185, 2188, 2193, 2196, 2202, 2207, 2240, and 2243 each coordinate Zn(2+). The RING-type 1 zinc finger occupies 2074-2124; the sequence is CPVCVTPLGPHDDSPSLCCLHCCCKSCWNEYLTTRIEQNFVLNCTCPIADC. Residues 2144–2207 form an IBR-type zinc finger; the sequence is SKYEKALLRG…FPEAHYPASC (64 aa). Residues 2240 to 2269 form an RING-type 2; atypical zinc finger; it reads CPSCQAPIEKNEGCLHMTCARCNHGFCWRC. The active site involves C2253. Residues C2258, C2261, C2266, C2269, H2277, and C2283 each contribute to the Zn(2+) site. At S2440 the chain carries Phosphoserine. The tract at residues 2443 to 2530 is disordered; that stretch reads VETREVKGSN…DEDEDDESYD (88 aa). Residues 2452–2462 show a composition bias toward polar residues; the sequence is NVPSDQPQGSS. The stretch at 2459 to 2500 forms a coiled coil; it reads QGSSGLEVEDEEEEEEEEEEEEEEEEEDVPEWQHEFDEELDN. 2 stretches are compositionally biased toward acidic residues: residues 2465 to 2510 and 2520 to 2530; these read EVED…EESE and GDEDEDDESYD.

Belongs to the cullin family. As to quaternary structure, component of a Cul9-RING complex consisting of CUL9 and RBX1; the CUL9-RBX1 complex is a heterododecamer composed of six CUL9 and six RBX1 protomers. Interacts (via C-terminal TRIAD/RBR supradomain) with E2 ubiquitin-conjugating enzyme UBE2L3. Interacts with CUL7; the interaction with the CUL7 component of the 3M complex leads to inhibition of CUL9 activity. The CUL7-CUL9 heterodimer seems to interact specifically with TP53, likely via the CPH domain. Forms a complex with p53/TP53 in the cytoplasm of unstressed cells. Interacts with UBCH7 and UBCH8. Post-translationally, autoubiquitinated by the CUL9-RBX1 complex at Lys-87. Neddylated. Neddylation is mediated by E1 enzyme UBA3-NAE1 complex and E2 enzyme UBE2F. Structural rearrangment of the C-terminal TRIAD/RBR supradomain may play a role in neddylation and deneddylation.

Its subcellular location is the cytoplasm. Core component of the Cul9-RING ubiquitin-protein ligase complex composed of CUL9 and RBX1. The CUL9-RBX1 complex mediates ubiquitination and subsequent degradation of BIRC5 and is required to maintain microtubule dynamics and genome integrity. Acts downstream of the 3M complex, which inhibits CUL9 activity and the ubiquitination of BIRC5. The CUL9-RBX1 complex also mediates mono-ubiquitination of p53/TP53. Acts as a cytoplasmic anchor protein in p53/TP53-associated protein complex. Regulates the subcellular localization of p53/TP53 and its subsequent function. Ubiquitinates apurinic/apyrimidinic endodeoxyribonuclease APEX2. Ubiquitination by the CUL9-RBX1 complex is predominantly mediated by E2 ubiquitin-conjugating enzymes UBE2L3 and UBE2D2. This is Cullin-9 (Cul9) from Mus musculus (Mouse).